A 284-amino-acid polypeptide reads, in one-letter code: Tryptophan 2,3-dioxygenase (284 aa).

Residues 53–57 (FIVQH), Tyr-115, and Arg-119 each bind substrate. His-242 lines the heme pocket. Residue Thr-256 coordinates substrate.

This sequence belongs to the tryptophan 2,3-dioxygenase family. Homotetramer. Heme serves as cofactor.

The enzyme catalyses L-tryptophan + O2 = N-formyl-L-kynurenine. It functions in the pathway amino-acid degradation; L-tryptophan degradation via kynurenine pathway; L-kynurenine from L-tryptophan: step 1/2. Its function is as follows. Heme-dependent dioxygenase that catalyzes the oxidative cleavage of the L-tryptophan (L-Trp) pyrrole ring and converts L-tryptophan to N-formyl-L-kynurenine. Catalyzes the oxidative cleavage of the indole moiety. This is Tryptophan 2,3-dioxygenase from Bordetella pertussis (strain Tohama I / ATCC BAA-589 / NCTC 13251).